Here is a 636-residue protein sequence, read N- to C-terminus: MSKLLVIALLLLPLINHGIYLATAWDDQDFFKYCPPSKCSQHGPMIRYPLCLESSNTSSSSSCGCAGRSIWKLACSGQDTILVHPVLGPYSVSAIDYRRSSMKITPLVDPCLVLQQKLIISRSSSSPQVDVINDEKPSFDENFFESSSATIVHCSREFTPAAAHADSIAGPVSCLSNTTHFFYLVNSDEDMSILPLDCKVVPVSDRGGISLPHMLKDQMFYNFTETAKKIPSFAETAVSWDEGDCRECELSGRRCAFSSQRDREFCMPDPHGSHIKVIAATSSVAAFVALLLTVATVLYLSLKTRYNAEIHMKVEMFLKTYGTSKPTRYTFSEVKKMARRFKEKVGQGGFGSVYKGELPNGVPVAVKMLENSTGEGESFINEVATIGLIHHANIVRLLGFCSEGMRRALIYEFMPNESLEKYIFSDDSNIFQNLLVPEKLLDIALGIARGMEYLHQGCNQRILHFDIKPHNILLDYNFNPKISDFGLAKLCARDQSIVTLTAARGTMGYIAPELYSRNFGGVSYKADVYSFGMLVLEMVSGRRNSDPRIGSQDDVYLPEWIYEKVINGEELALTLETTQEEKDKVRQLAMVALWCIQWNPRNRPSMTKVVNMLTGRLQSLQMPPKPFVSSENELMS.

The first 24 residues, 1–24, serve as a signal peptide directing secretion; the sequence is MSKLLVIALLLLPLINHGIYLATA. Topologically, residues 25 to 276 are extracellular; sequence WDDQDFFKYC…MPDPHGSHIK (252 aa). N-linked (GlcNAc...) asparagine glycosylation is found at Asn-56, Asn-177, and Asn-222. The helical transmembrane segment at 277 to 297 threads the bilayer; it reads VIAATSSVAAFVALLLTVATV. Over 298–636 the chain is Cytoplasmic; it reads LYLSLKTRYN…FVSSENELMS (339 aa). The Protein kinase domain maps to 339–628; the sequence is RRFKEKVGQG…SLQMPPKPFV (290 aa). ATP is bound by residues 345 to 353 and Lys-367; that span reads VGQGGFGSV. Asp-466 serves as the catalytic Proton acceptor.

This sequence belongs to the protein kinase superfamily. Ser/Thr protein kinase family. As to expression, specifically expressed in the aerial parts of the plant.

The protein resides in the cell membrane. It catalyses the reaction L-seryl-[protein] + ATP = O-phospho-L-seryl-[protein] + ADP + H(+). The enzyme catalyses L-threonyl-[protein] + ATP = O-phospho-L-threonyl-[protein] + ADP + H(+). The chain is Rust resistance kinase Lr10 from Triticum aestivum (Wheat).